Reading from the N-terminus, the 481-residue chain is Ribosomal RNA small subunit methyltransferase F (481 aa).

Residues 125-131 (AAAPGSK), Glu149, Asp176, and Asp194 contribute to the S-adenosyl-L-methionine site. Residue Cys247 is the Nucleophile of the active site.

This sequence belongs to the class I-like SAM-binding methyltransferase superfamily. RsmB/NOP family.

It localises to the cytoplasm. It carries out the reaction cytidine(1407) in 16S rRNA + S-adenosyl-L-methionine = 5-methylcytidine(1407) in 16S rRNA + S-adenosyl-L-homocysteine + H(+). Its function is as follows. Specifically methylates the cytosine at position 1407 (m5C1407) of 16S rRNA. The protein is Ribosomal RNA small subunit methyltransferase F of Psychromonas ingrahamii (strain DSM 17664 / CCUG 51855 / 37).